A 491-amino-acid chain; its full sequence is Monodehydroascorbate reductase 5, chlorplastic (491 aa).

The transit peptide at 1–42 directs the protein to the chloroplast; it reads MASTAAAASSQGCISWALRQRGLGGGGARAVPVLPRRRFCVS. FAD is bound by residues 61-64, Glu-88, Arg-95, Lys-100, and 194-195; these read GGNA and RD. NAD(+) is bound by residues 217–223, Glu-241, Arg-247, and Gly-306; that span reads GGYIGME. An NADP(+)-binding site is contributed by 219-223; sequence YIGME. Arg-247 and Gly-306 together coordinate NADP(+). Position 344 (Asp-344) interacts with FAD. Position 360-361 (360-361) interacts with NAD(+); the sequence is EH. 360-361 contacts NADP(+); the sequence is EH. FAD is bound at residue Val-362. L-ascorbate is bound at residue Arg-366. Residue Tyr-391 participates in FAD binding. Residue Tyr-391 participates in NAD(+) binding. Tyr-391 provides a ligand contact to NADP(+). L-ascorbate is bound at residue Arg-393.

The protein belongs to the FAD-dependent oxidoreductase family. The cofactor is FAD.

The protein resides in the plastid. It localises to the chloroplast. The catalysed reaction is 2 monodehydro-L-ascorbate radical + NADH + H(+) = 2 L-ascorbate + NAD(+). Catalyzes the conversion of monodehydroascorbate to ascorbate, oxidizing NADH in the process. Ascorbate is a major antioxidant against reactive oxygen species (ROS) and nitric oxide (NO). This Oryza sativa subsp. japonica (Rice) protein is Monodehydroascorbate reductase 5, chlorplastic.